Here is a 62-residue protein sequence, read N- to C-terminus: Potassium channel toxin alpha-KTx 6.21 (62 aa).

Residues 1-24 form the signal peptide; the sequence is MNAKLIYLLLVVTTMMLTFDTTQA. Intrachain disulfides connect cysteine 29–cysteine 50, cysteine 35–cysteine 55, cysteine 39–cysteine 57, and cysteine 45–cysteine 60. Valine amide is present on valine 61.

The protein belongs to the short scorpion toxin superfamily. Potassium channel inhibitor family. Alpha-KTx 06 subfamily. C-terminal amidation is important for activity. There is a 50-70-fold decrease in ability to inhibit Kv1.2/KCNA2 when the toxin is not amidated. This decrease may be explained by a 23-fold slower association rate (k(on)) together with a 2-fold faster dissociation rate (k(off)). Expressed by the venom gland.

It localises to the secreted. Its function is as follows. Reversible blocker of voltage-gated potassium channels with fast binding and unbinding kinetics. Has highest activity on human voltage-gated potassium channel Kv1.2/KCNA2 channels (IC(50)=0.11-0.16 nM), whereas its affinity for other channels tested was in the nanomolar range (hKv1.1/KCNA1, IC(50)=253 nM; hKv1.3/KCNA3, IC(50)=91 nM; and hKCa3.1/KCNN4, IC(50)=70 nM). This chain is Potassium channel toxin alpha-KTx 6.21, found in Urodacus yaschenkoi (Inland robust scorpion).